The primary structure comprises 64 residues: MALALLGLTIKPEHVPEGTGKAVADVEALACDPAQCMRSCPFNPFLNQYGGICKNGQCVCVKPS.

Expressed in fat body, but not in cephalothorax, silk gland, midgut.

Functionally, insecticidal toxin. In Araneus ventricosus (Orbweaver spider), this protein is U2-aranetoxin-Av1a.